Reading from the N-terminus, the 493-residue chain is Glutamyl-tRNA(Gln) amidotransferase subunit A (493 aa).

Active-site charge relay system residues include K78 and S158. Residue S182 is the Acyl-ester intermediate of the active site.

The protein belongs to the amidase family. GatA subfamily. As to quaternary structure, heterotrimer of A, B and C subunits.

The enzyme catalyses L-glutamyl-tRNA(Gln) + L-glutamine + ATP + H2O = L-glutaminyl-tRNA(Gln) + L-glutamate + ADP + phosphate + H(+). Its function is as follows. Allows the formation of correctly charged Gln-tRNA(Gln) through the transamidation of misacylated Glu-tRNA(Gln) in organisms which lack glutaminyl-tRNA synthetase. The reaction takes place in the presence of glutamine and ATP through an activated gamma-phospho-Glu-tRNA(Gln). This is Glutamyl-tRNA(Gln) amidotransferase subunit A from Rickettsia felis (strain ATCC VR-1525 / URRWXCal2) (Rickettsia azadi).